We begin with the raw amino-acid sequence, 330 residues long: Tryptophan--tRNA ligase (330 aa).

ATP-binding positions include 6–8 (QPT) and 14–15 (GN). The 'HIGH' region signature appears at 7–15 (PTGSLHLGN). Residue Asp-130 coordinates L-tryptophan. ATP-binding positions include 142–144 (GED), Val-185, and 194–198 (KMSKS). A 'KMSKS' region motif is present at residues 194 to 198 (KMSKS).

The protein belongs to the class-I aminoacyl-tRNA synthetase family. In terms of assembly, homodimer.

The protein localises to the cytoplasm. The catalysed reaction is tRNA(Trp) + L-tryptophan + ATP = L-tryptophyl-tRNA(Trp) + AMP + diphosphate + H(+). Its function is as follows. Catalyzes the attachment of tryptophan to tRNA(Trp). In Thermosynechococcus vestitus (strain NIES-2133 / IAM M-273 / BP-1), this protein is Tryptophan--tRNA ligase.